Consider the following 411-residue polypeptide: Bifunctional protein GlmU (411 aa).

A pyrophosphorylase region spans residues 1–204 (MDAIILCAGK…IGKLHGVELN (204 aa)). Residues 6–9 (LCAG), Q74, and G79 each bind UTP. The N-acetyl-alpha-D-glucosamine 1-phosphate site is built by T80, G130, N142, and N158. The tract at residues 205–224 (GYWNDIGHPWDVLSANSHFL) is linker. Residues 225 to 411 (NKIISKISGK…DELVITKKRN (187 aa)) are N-acetyltransferase. Catalysis depends on H308, which acts as the Proton acceptor. 2 residues coordinate acetyl-CoA: A384 and K401.

The protein in the N-terminal section; belongs to the N-acetylglucosamine-1-phosphate uridyltransferase family. In the C-terminal section; belongs to the transferase hexapeptide repeat family.

The catalysed reaction is N-acetyl-alpha-D-glucosamine 1-phosphate + UTP + H(+) = UDP-N-acetyl-alpha-D-glucosamine + diphosphate. It catalyses the reaction alpha-D-glucosamine 1-phosphate + acetyl-CoA = N-acetyl-alpha-D-glucosamine 1-phosphate + CoA + H(+). It functions in the pathway nucleotide-sugar biosynthesis; UDP-N-acetyl-alpha-D-glucosamine biosynthesis; N-acetyl-alpha-D-glucosamine 1-phosphate from alpha-D-glucosamine 6-phosphate (route II): step 2/2. It participates in nucleotide-sugar biosynthesis; UDP-N-acetyl-alpha-D-glucosamine biosynthesis; UDP-N-acetyl-alpha-D-glucosamine from N-acetyl-alpha-D-glucosamine 1-phosphate: step 1/1. Functionally, catalyzes the last two sequential reactions in the de novo biosynthetic pathway for UDP-N-acetyl-glucosamine (UDP-GlcNAc). Responsible for the acetylation of GlcN-1-P to GlcNAc-1-P, and for the uridyl transfer from UTP to GlcNAc-1-P, to produce UDP-GlcNAc and pyrophosphate. The protein is Bifunctional protein GlmU of Methanococcus maripaludis (strain C5 / ATCC BAA-1333).